Reading from the N-terminus, the 270-residue chain is MAVITKIEVQKRSKERFNIYIDKGQGEEYGFSVNEVILIKHGLQKGLEIDEIALGNILYNEEVQKAYLQAISYLSYQMRTKLEIEDFLRKKEVGQAIISEVVSKLLHDRYINDKEYAILYTRTQSNVNRKGPTVIKRELLNKGVQDLIITHSLQEYPKEKQIENALILIEKKKKSYQKHSFLQMKLKLDEMLVRKGYSRDVIQICLEELKDEKDDEKQQEALHYHGNKYYEKYKKYDGWTFENKMKQALYRKGFSIDEIEIFLQMKREEG.

This sequence belongs to the RecX family.

Its subcellular location is the cytoplasm. In terms of biological role, modulates RecA activity. The protein is Regulatory protein RecX of Bacillus cereus (strain ZK / E33L).